Here is a 145-residue protein sequence, read N- to C-terminus: Superoxide dismutase [Mn/Fe] (145 aa).

Positions 10 and 64 each coordinate Fe(3+). Residues His-10 and His-64 each coordinate Mn(2+). Positions 126–145 are disordered; it reads TSTANQDTPISEGKKPILGL.

This sequence belongs to the iron/manganese superoxide dismutase family. Requires Mn(2+) as cofactor. Fe(3+) serves as cofactor.

The catalysed reaction is 2 superoxide + 2 H(+) = H2O2 + O2. Destroys superoxide anion radicals which are normally produced within the cells and which are toxic to biological systems. Catalyzes the dismutation of superoxide anion radicals into O2 and H2O2 by successive reduction and oxidation of the transition metal ion at the active site. The sequence is that of Superoxide dismutase [Mn/Fe] (sodA) from Streptococcus oralis.